Reading from the N-terminus, the 829-residue chain is Protein SEY1 homolog 2 (829 aa).

A disordered region spans residues 1-21 (MDEVSPTKHFTSKPLLPTKTP). Over 1–728 (MDEVSPTKHF…EKENSEIKYQ (728 aa)) the chain is Cytoplasmic. The GB1/RHD3-type G domain maps to 83-305 (GMDYNAVGIL…FLPQYNKEIP (223 aa)). GTP is bound at residue 93-100 (GAQSSGKS). Coiled coils occupy residues 372 to 396 (KKIM…YMES) and 576 to 596 (DTIE…IKEL). Residues 729–749 (IPLYLIVLVIFFGFDEFIAIL) form a helical membrane-spanning segment. Residues 750–752 (TNP) lie on the Lumenal side of the membrane. Residues 753-773 (LLFILTLIIGGGIYIGYKLNL) traverse the membrane as a helical segment. The Cytoplasmic segment spans residues 774 to 829 (GGVAKNYIQYLLSMSLSSTMEYLRTIPFFTPLIDKIWPKDDNKDDDSTEETQEETK).

It belongs to the TRAFAC class dynamin-like GTPase superfamily. GB1/RHD3 GTPase family. RHD3 subfamily.

Its subcellular location is the endoplasmic reticulum membrane. Probable GTP-binding protein that may be involved in cell development. In Entamoeba dispar (strain ATCC PRA-260 / SAW760), this protein is Protein SEY1 homolog 2.